Here is a 327-residue protein sequence, read N- to C-terminus: Zinc transport protein ZntB (327 aa).

Residues 1–273 (MEGIKGSEVN…SRRTYTMSLM (273 aa)) are Cytoplasmic-facing. Residues 274 to 294 (AMVFLPSTFLTGLFGVNLGGI) traverse the membrane as a helical segment. Over 295–300 (PGGGYQ) the chain is Periplasmic. Residues 301 to 321 (FGFSAFCIMLVVLIGGVAWWL) traverse the membrane as a helical segment. Over 322-327 (HRSKWL) the chain is Cytoplasmic.

It belongs to the CorA metal ion transporter (MIT) (TC 1.A.35) family.

The protein localises to the cell inner membrane. It carries out the reaction Zn(2+)(out) + H(+)(out) = Zn(2+)(in) + H(+)(in). Zinc transporter. Acts as a Zn(2+):proton symporter, which likely mediates zinc ion uptake. This chain is Zinc transport protein ZntB, found in Enterobacter sp. (strain 638).